The primary structure comprises 266 residues: Hydroxymethylpyrimidine/phosphomethylpyrimidine kinase (266 aa).

Residue Q43 participates in 4-amino-5-hydroxymethyl-2-methylpyrimidine binding.

This sequence belongs to the ThiD family.

It carries out the reaction 4-amino-5-hydroxymethyl-2-methylpyrimidine + ATP = 4-amino-2-methyl-5-(phosphooxymethyl)pyrimidine + ADP + H(+). The enzyme catalyses 4-amino-2-methyl-5-(phosphooxymethyl)pyrimidine + ATP = 4-amino-2-methyl-5-(diphosphooxymethyl)pyrimidine + ADP. Its pathway is cofactor biosynthesis; thiamine diphosphate biosynthesis; 4-amino-2-methyl-5-diphosphomethylpyrimidine from 5-amino-1-(5-phospho-D-ribosyl)imidazole: step 2/3. The protein operates within cofactor biosynthesis; thiamine diphosphate biosynthesis; 4-amino-2-methyl-5-diphosphomethylpyrimidine from 5-amino-1-(5-phospho-D-ribosyl)imidazole: step 3/3. In terms of biological role, catalyzes the phosphorylation of hydroxymethylpyrimidine phosphate (HMP-P) to HMP-PP, and of HMP to HMP-P. This is Hydroxymethylpyrimidine/phosphomethylpyrimidine kinase (thiD) from Rhizobium meliloti (strain 1021) (Ensifer meliloti).